The chain runs to 307 residues: tRNA pseudouridine synthase B (307 aa).

Catalysis depends on Asp41, which acts as the Nucleophile.

This sequence belongs to the pseudouridine synthase TruB family. Type 1 subfamily.

It carries out the reaction uridine(55) in tRNA = pseudouridine(55) in tRNA. In terms of biological role, responsible for synthesis of pseudouridine from uracil-55 in the psi GC loop of transfer RNAs. This is tRNA pseudouridine synthase B from Prochlorococcus marinus (strain MIT 9312).